A 714-amino-acid chain; its full sequence is Calpain-1 catalytic subunit (714 aa).

Residues 55 to 354 form the Calpain catalytic domain; the sequence is LFRDEAFPPV…FTRLEICNLT (300 aa). Residues glutamine 109 and aspartate 114 each contribute to the Ca(2+) site. Active-site residues include cysteine 115, histidine 272, and asparagine 296. The Ca(2+) site is built by serine 316, aspartate 318, and glutamate 323. A Phosphothreonine modification is found at threonine 354. A domain III region spans residues 355–526; sequence PDALKSRTIR…KSAGTAELDD (172 aa). The linker stretch occupies residues 527 to 542; it reads QIQANLPDEQVLSEEE. 4 EF-hand domains span residues 541-576, 585-618, 615-650, and 680-714; these read EEIDENFKALFRQLAGEDMEISVKELRTILNRIISK, FSLESCRSMVNLMDRDGNGKLGLVEFNILWNRIR, NRIRNYLSIFRKFDLDKSGSMSAYEMRMAIESAGFK, and VRLETMFRFFKTLDTDLDGVVTFDLFKWLQLTMFA. The tract at residues 543–713 is domain IV; sequence IDENFKALFR…LFKWLQLTMF (171 aa). Positions 598, 600, 602, 604, 609, 628, 630, 632, 634, and 639 each coordinate Ca(2+).

This sequence belongs to the peptidase C2 family. As to quaternary structure, forms a heterodimer with a small (regulatory) subunit (CAPNS1). Ca(2+) is required as a cofactor. Post-translationally, undergoes calcium-induced successive autoproteolytic cleavages that generate a membrane-bound 78 kDa active form and an intracellular 75 kDa active form. Calpastatin reduces with high efficiency the transition from 78 kDa to 75 kDa calpain forms. In terms of tissue distribution, ubiquitous.

The protein localises to the cytoplasm. It is found in the cell membrane. The enzyme catalyses Broad endopeptidase specificity.. Its activity is regulated as follows. Activated by micromolar concentrations of calcium and inhibited by calpastatin. Functionally, calcium-regulated non-lysosomal thiol-protease which catalyze limited proteolysis of substrates involved in cytoskeletal remodeling and signal transduction. Proteolytically cleaves CTBP1. Cleaves and activates caspase-7 (CASP7). The protein is Calpain-1 catalytic subunit (CAPN1) of Macaca fascicularis (Crab-eating macaque).